The chain runs to 765 residues: MQIRYFLALSLLPQVVLADESPTASASQCVIEPPVPRIVSQPGLSAADQEKIRIVSDRSNAEMGKQAIFTGDVVFSQGDRHIAADEAILDQATEQFDANGNLVFQDSIFTVTADSLQAQMRSNRATLKGAQYWLHGQQVHGDAEKLQITMNNNLILTNTNFTTCPPDNVSWLLEAEKIKINSEEEWGEIWNAKLRVADIPVFYIPYMTVPVSDKRKTGFLYPSFSTSTTNGFEVSAPYYWNIAPEYDLTFTPNYMSSRGLFTKTEFRYLAGEAQSGRLNLEYLGNDQMISGSPNRYLYNWQHQGAIDKNWRVLANFTEVSDNNYFNDLKSDVNRATDNQLSRIGEVSYFERDWDISTRVQDIKVLGEDEKPYQVMPQVNFNYRAADFWNNLDFGFNSELTNFAHQDSDMNTATRLHMAPSLTLPIHGPSGSLTSQVKLMQTNYWQEKNNSGFDGLDDTVSRTIPQVRINGQINFERFTELFDQNYRQTLEPQFQYLYVGYEDQRGIGIYDTAQLQDDYFGLFRDRRFSGLDRIADANQVTLGVTTRFFDDHNQEATKFSLGQILYLQDSKLGYEDNLFEQNQSTSVLAAELDTRLSHDWYLGAAIQYDTNSSDNKKTEVTLDFRPEANKLLQLSYRYVPDLLNSNTNDLVNISQAGVRGAWPINDSLYFVGNWYYDLNESRSIETYTGFQYESCCYAIRLSYHYRIKTNYDDNIGSAVIDEREQFESGVYLNLVIKGLGGSGPLGVSDMLNDGLFNYRKPLYLRN.

Positions 1 to 18 (MQIRYFLALSLLPQVVLA) are cleaved as a signal peptide.

This sequence belongs to the LptD family. Component of the lipopolysaccharide transport and assembly complex. Interacts with LptE and LptA.

The protein localises to the cell outer membrane. Its function is as follows. Together with LptE, is involved in the assembly of lipopolysaccharide (LPS) at the surface of the outer membrane. This chain is LPS-assembly protein LptD, found in Shewanella sp. (strain ANA-3).